Consider the following 507-residue polypeptide: ATP synthase subunit alpha, chloroplastic (507 aa).

170–177 (GDRQTGKT) lines the ATP pocket.

Belongs to the ATPase alpha/beta chains family. F-type ATPases have 2 components, CF(1) - the catalytic core - and CF(0) - the membrane proton channel. CF(1) has five subunits: alpha(3), beta(3), gamma(1), delta(1), epsilon(1). CF(0) has four main subunits: a, b, b' and c.

The protein resides in the plastid. The protein localises to the chloroplast thylakoid membrane. The catalysed reaction is ATP + H2O + 4 H(+)(in) = ADP + phosphate + 5 H(+)(out). In terms of biological role, produces ATP from ADP in the presence of a proton gradient across the membrane. The alpha chain is a regulatory subunit. The sequence is that of ATP synthase subunit alpha, chloroplastic from Acorus calamus var. americanus (American sweet flag).